Here is a 214-residue protein sequence, read N- to C-terminus: MNKAELIDVLTQKLGSDRRQATAAVENVVDTIVRAVHKGDSVTITGFGVFEQRRRAARVARNPRTGETVKVKPTSVPAFRPGAQFKAVVSGAQRLPAEGPAVKRGVGASAAKKVAKKAPAKKATKAAKKAATKAPARKAATKAPAKKAATKAPAKKAVKATKSPAKKVTKAVKKTAVKASVRKAATKAPAKKAAAKRPATKAPAKKATARRGRK.

Lys3 carries the N6-acetyllysine modification. Lys3 is modified (N6-succinyllysine). Residues Thr43 and Thr45 each carry the phosphothreonine modification. Residues Lys72, Lys86, and Lys103 each carry the N6-acetyllysine modification. The disordered stretch occupies residues 100–214 (PAVKRGVGAS…KKATARRGRK (115 aa)). The segment covering 102 to 112 (VKRGVGASAAK) has biased composition (low complexity). At Lys113 the chain carries N6-succinyllysine. A compositionally biased stretch (basic residues) spans 113-214 (KVAKKAPAKK…KKATARRGRK (102 aa)). N6-acetyllysine occurs at positions 116 and 133. Lys142 is subject to N6-succinyllysine. 2 positions are modified to N6-acetyllysine: Lys146 and Lys167.

Belongs to the bacterial histone-like protein family. Long actinobacterial subfamily. As to quaternary structure, oligomerizes. Homodimer; the crystallized protein is missing the C-terminal 105 residues. Interacts with topoisomerase 1 (topA). Interacts with Eis. Interacts with NAD-dependent protein deacylase NPD (MRA_1161). Interacts with MRA_0812 CoA transferase. In terms of processing, phosphorylated in vivo on Ser and Thr-residues; the protein is degraded during purification so most sites were not identified, but at least one of Thr-43 and/or Thr-45 are modified in vivo. In vitro at least PknE, PknF and PknB phosphorylate HupB; PknE is the most active and phosphorylates many sites in vitro including Thr-43 and Thr-45. Acetylated on 8 Lys residues in vivo (probably by Eis). In vitro acetylated by Eis on 28 residues (strains H37Rv and H37Ra), many more than those identified in vivo. Also acetylated by MRA_0812. Deacetylated in vitro by NAD-dependent protein deacylase NPD (MRA_1161). Post-translationally, succinylated in vivo and in vitro by MRA_0812 and by Eis; only 3 residues are found to be succinylated in vivo, while 27 are modifed in vitro by MRA_0812 and 32 are succinylated by Eis. NAD-dependent protein deacylase (MRA_1161) desuccinylates this protein.

It localises to the cytoplasm. The protein resides in the nucleoid. The enzyme catalyses 4 Fe(2+) + O2 + 4 H(+) = 4 Fe(3+) + 2 H2O. With respect to regulation, two trans-stilbene derivatives, 4,4'-[(E)-ethene-1,2 diylbis({5[(phenylcarbonyl)amino]benzene-2,1-diyl}sulfonylimino)] dibenzoic acid and its methoxy derivative 4,4'-[1,2-ethenediylbis({5-[(4-methoxybenzoyl)amino]-2,1phenylene}sulfonylimino)] dibenzoic acid, respectively SD1 and SD4, inhibit DNA binding with 50% inhibition at 20 uM for SD1 and 1.7 uM for SD4. SD1 and SD4 have minimal inhibitory concentrations of 400 and 800 uM on strain H37Ra respectively. In terms of biological role, a nucleoid-associated protein (NAP) that plays a role in local chromosome architecture. Binds DNA non-sequence specifically; in vitro phosphorylation of an N-terminal fragment decreases DNA-binding. Stimulates supercoiling relaxation by topoisomerase 1 (Top1, topA), at higher than 80 uM inhibits relaxation, has no effect on DNA gyrase; the effect is independent of DNA-binding. Increases the intervening strand passage activity of Top1 that occurs between the two catalytic trans-esterification reactions. Does not bind ssDNA, probably helps condense chromosomes. Binds dsDNA; in vitro acetylated protein binds 10-fold less well to DNA (note in vitro acetylated protein is more heavily modified than in vivo modified protein). In vitro acetylated protein compacts DNA less well than unmodified protein. In vitro succinylated DNA bind dsDNA less well than unmodified protein (note in vitro succinylated protein is more heavily modified than in vivo modified protein). Functionally, has ferroxidase activity, converts Fe(2+) into Fe(3+). Binds Fe(3+) but not Fe(2+); prevents the generation of hydroxyl radicals by the Fenton reaction and thus protects DNA from damage. May function in iron storage. Required for biofilm formation; trimethylation by recombinant human SUV39H1 (a histone methyltransferase) inhibits biofilm formation. Probably influences transcription. RNase E and HupB jointly contribute to cellular adaptation to changing growth conditions and survival during antibiotic treatment and in the host. In Mycobacterium tuberculosis (strain ATCC 25177 / H37Ra), this protein is DNA-binding protein HupB.